The primary structure comprises 281 residues: Very long chain fatty acid elongase 7 (281 aa).

An N-acetylalanine modification is found at Ala2. Topologically, residues 2–27 (AFSDLTSRTVRLYDNWIKDADPRVED) are lumenal. A helical membrane pass occupies residues 28 to 48 (WLLMSSPLPQTIILGFYVYFV). The Cytoplasmic portion of the chain corresponds to 49 to 66 (TSLGPKLMENRKPFELKK). Residues 67–87 (VMITYNFSIVLFSVYMFYEFI) form a helical membrane-spanning segment. The Lumenal portion of the chain corresponds to 88–115 (MSGWGTGYSFRCDIVDYSQSPTALRMVR). Cys99 and Cys231 form a disulfide bridge. A helical membrane pass occupies residues 116-136 (TCWLYYFSKFIELLDTIFFIL). 3-oxoeicosanoyl-CoA contacts are provided by Lys124, Arg137, Lys139, Gln142, and His147. Topologically, residues 137 to 142 (RKKNSQ) are cytoplasmic. The helical transmembrane segment at 143 to 162 (VTFLHVFHHTIMPWTWWFGV) threads the bilayer. Positions 147–151 (HVFHH) match the HxxHH motif motif. His150 functions as the Nucleophile in the catalytic mechanism. Topologically, residues 163–171 (KFAAGGLGT) are lumenal. A helical transmembrane segment spans residues 172–194 (FHAFLNTAVHVVMYSYYGLCALG). 4 residues coordinate 3-oxoeicosanoyl-CoA: Tyr187, Lys204, Thr208, and Gln211. Over 195-206 (PDYQKYLWWKKY) the chain is Cytoplasmic. The chain crosses the membrane as a helical span at residues 207–227 (LTSLQLIQFVLITIHISQFFF). Topologically, residues 228 to 236 (MEDCKYQFP) are lumenal. A helical membrane pass occupies residues 237-257 (VFQYIIMSYGCIFLLLFLHFW). The Cytoplasmic portion of the chain corresponds to 258 to 281 (YRAYTKGQRLPKTVKHGICKNKDH). 3-oxoeicosanoyl-CoA is bound at residue Arg266. Positions 277 to 281 (KNKDH) match the Di-lysine motif motif.

The protein belongs to the ELO family. ELOVL7 subfamily. As to quaternary structure, homodimer. Interacts with TECR.

The protein localises to the endoplasmic reticulum membrane. It catalyses the reaction a very-long-chain acyl-CoA + malonyl-CoA + H(+) = a very-long-chain 3-oxoacyl-CoA + CO2 + CoA. It carries out the reaction eicosanoyl-CoA + malonyl-CoA + H(+) = 3-oxodocosanoyl-CoA + CO2 + CoA. The catalysed reaction is (5Z,8Z,11Z,14Z)-eicosatetraenoyl-CoA + malonyl-CoA + H(+) = (7Z,10Z,13Z,16Z)-3-oxodocosatetraenoyl-CoA + CO2 + CoA. The enzyme catalyses (6Z,9Z,12Z)-octadecatrienoyl-CoA + malonyl-CoA + H(+) = (8Z,11Z,14Z)-3-oxoeicosatrienoyl-CoA + CO2 + CoA. It catalyses the reaction (9Z,12Z)-octadecadienoyl-CoA + malonyl-CoA + H(+) = (11Z,14Z)-3-oxoicosa-11,14-dienoyl-CoA + CO2 + CoA. It carries out the reaction (9Z)-octadecenoyl-CoA + malonyl-CoA + H(+) = 3-oxo-(11Z)-eicosenoyl-CoA + CO2 + CoA. The catalysed reaction is octadecanoyl-CoA + malonyl-CoA + H(+) = 3-oxoeicosanoyl-CoA + CO2 + CoA. The enzyme catalyses hexadecanoyl-CoA + malonyl-CoA + H(+) = 3-oxooctadecanoyl-CoA + CO2 + CoA. It catalyses the reaction (9Z,12Z,15Z)-octadecatrienoyl-CoA + malonyl-CoA + H(+) = (11Z,14Z,17Z)-3-oxoeicosatrienoyl-CoA + CO2 + CoA. The protein operates within lipid metabolism; fatty acid biosynthesis. Functionally, catalyzes the first and rate-limiting reaction of the four reactions that constitute the long-chain fatty acids elongation cycle. This endoplasmic reticulum-bound enzymatic process allows the addition of 2 carbons to the chain of long- and very long-chain fatty acids (VLCFAs) per cycle. Condensing enzyme with higher activity toward C18 acyl-CoAs, especially C18:3(n-3) acyl-CoAs and C18:3(n-6)-CoAs. Also active toward C20:4-, C18:0-, C18:1-, C18:2- and C16:0-CoAs, and weakly toward C20:0-CoA. Little or no activity toward C22:0-, C24:0-, or C26:0-CoAs. May participate in the production of saturated and polyunsaturated VLCFAs of different chain lengths that are involved in multiple biological processes as precursors of membrane lipids and lipid mediators. This Bos taurus (Bovine) protein is Very long chain fatty acid elongase 7.